The sequence spans 108 residues: MAKFIDERTFCYKCGMKVSPGIFHRCEKTTSFEPVVSDTYWCAYCKSTIRIIFDGRIRRCSNCGHDLHGGIANKIETVVHRDIESDKMLRRFMDPYSYSSVNKTNDRW.

This is an uncharacterized protein from Acanthamoeba polyphaga (Amoeba).